Consider the following 330-residue polypeptide: Mas-related G-protein coupled receptor member B8 (330 aa).

Over 1–33 the chain is Extracellular; that stretch reads MDSSFPDWNIEFREQNESYFMESSSCDMSLAMS. N-linked (GlcNAc...) asparagine glycosylation is present at asparagine 16. The chain crosses the membrane as a helical span at residues 34-54; it reads LLSIIIAIIGLTGNVIVLQLL. Residues 55–62 are Cytoplasmic-facing; the sequence is GFHMHRNA. The chain crosses the membrane as a helical span at residues 63-83; that stretch reads FSVYIFNLSGANFLFLCTHIV. Over 84 to 101 the chain is Extracellular; sequence FSLENLIRQFHYIDIHMA. The chain crosses the membrane as a helical span at residues 102-122; that stretch reads LFSVNVTILAYLAGVSMITAI. Topologically, residues 123-146 are cytoplasmic; that stretch reads SVEYWLSVLWPTWYHAQRPKHTST. Residues 147–167 form a helical membrane-spanning segment; that stretch reads VICTLLWVFSLLLTLWNWIIC. The Extracellular portion of the chain corresponds to 168–177; that stretch reads KVLDYIYNWD. A helical membrane pass occupies residues 178–198; that stretch reads MCWKLALIIVVWLLVLFVVLS. The Cytoplasmic portion of the chain corresponds to 199–219; the sequence is RSNQALLFRVFCGSQQTPVTR. Residues 220-240 traverse the membrane as a helical segment; the sequence is LLVTIMLTALVVLICGFGIGI. At 241 to 260 the chain is on the extracellular side; sequence CFFYWKKEENSIMPCGYFYE. Residues 261-281 traverse the membrane as a helical segment; that stretch reads TILLLSGVNSCANPIICLFVG. Over 282–330 the chain is Cytoplasmic; it reads SIKHCQFQCGTLRLILQRAIQESPEEEDEEVEEVVEQEGGEEDEESTTL. The segment at 302-330 is disordered; it reads QESPEEEDEEVEEVVEQEGGEEDEESTTL. Acidic residues predominate over residues 304–330; that stretch reads SPEEEDEEVEEVVEQEGGEEDEESTTL.

Belongs to the G-protein coupled receptor 1 family. Mas subfamily.

The protein localises to the membrane. Orphan receptor. Probably involved in the function of nociceptive neurons. May regulate nociceptor function and/or development, including the sensation or modulation of pain. The protein is Mas-related G-protein coupled receptor member B8 (Mrgprb8) of Mus musculus (Mouse).